Here is a 144-residue protein sequence, read N- to C-terminus: Large ribosomal subunit protein uL11 (144 aa).

This sequence belongs to the universal ribosomal protein uL11 family. Part of the ribosomal stalk of the 50S ribosomal subunit. Interacts with L10 and the large rRNA to form the base of the stalk. L10 forms an elongated spine to which L12 dimers bind in a sequential fashion forming a multimeric L10(L12)X complex. One or more lysine residues are methylated.

In terms of biological role, forms part of the ribosomal stalk which helps the ribosome interact with GTP-bound translation factors. This is Large ribosomal subunit protein uL11 from Neisseria meningitidis serogroup B (strain ATCC BAA-335 / MC58).